We begin with the raw amino-acid sequence, 98 residues long: Small ribosomal subunit protein bS20 (98 aa).

The span at 1–12 (MAPRKPSKKVGP) shows a compositional bias: basic residues. The segment at 1–31 (MAPRKPSKKVGPQKRPSAEKRVITSKKKQLR) is disordered.

Belongs to the bacterial ribosomal protein bS20 family.

Its function is as follows. Binds directly to 16S ribosomal RNA. The sequence is that of Small ribosomal subunit protein bS20 from Chlamydia trachomatis serovar L2 (strain ATCC VR-902B / DSM 19102 / 434/Bu).